The primary structure comprises 375 residues: Succinyl-diaminopimelate desuccinylase (375 aa).

His66 provides a ligand contact to Zn(2+). The active site involves Asp68. Asp99 is a Zn(2+) binding site. Glu133 (proton acceptor) is an active-site residue. Zn(2+)-binding residues include Glu134, Glu162, and His348.

It belongs to the peptidase M20A family. DapE subfamily. Homodimer. Requires Zn(2+) as cofactor. It depends on Co(2+) as a cofactor.

The catalysed reaction is N-succinyl-(2S,6S)-2,6-diaminopimelate + H2O = (2S,6S)-2,6-diaminopimelate + succinate. It participates in amino-acid biosynthesis; L-lysine biosynthesis via DAP pathway; LL-2,6-diaminopimelate from (S)-tetrahydrodipicolinate (succinylase route): step 3/3. Its function is as follows. Catalyzes the hydrolysis of N-succinyl-L,L-diaminopimelic acid (SDAP), forming succinate and LL-2,6-diaminopimelate (DAP), an intermediate involved in the bacterial biosynthesis of lysine and meso-diaminopimelic acid, an essential component of bacterial cell walls. The chain is Succinyl-diaminopimelate desuccinylase from Serratia proteamaculans (strain 568).